The following is a 951-amino-acid chain: Glycine dehydrogenase (decarboxylating) 1 (951 aa).

Position 703 is an N6-(pyridoxal phosphate)lysine (lysine 703).

The protein belongs to the GcvP family. As to quaternary structure, the glycine cleavage system is composed of four proteins: P, T, L and H. Requires pyridoxal 5'-phosphate as cofactor.

It catalyses the reaction N(6)-[(R)-lipoyl]-L-lysyl-[glycine-cleavage complex H protein] + glycine + H(+) = N(6)-[(R)-S(8)-aminomethyldihydrolipoyl]-L-lysyl-[glycine-cleavage complex H protein] + CO2. Its function is as follows. The glycine cleavage system catalyzes the degradation of glycine. The P protein binds the alpha-amino group of glycine through its pyridoxal phosphate cofactor; CO(2) is released and the remaining methylamine moiety is then transferred to the lipoamide cofactor of the H protein. This is Glycine dehydrogenase (decarboxylating) 1 from Pseudomonas fluorescens (strain ATCC BAA-477 / NRRL B-23932 / Pf-5).